Consider the following 382-residue polypeptide: Histidine biosynthesis bifunctional protein HisB (382 aa).

Residues M1–A190 are histidinol-phosphatase. The Nucleophile role is filled by D8. D8, D10, and D129 together coordinate Mg(2+). The active-site Proton donor is D10. The tract at residues R191–L382 is imidazoleglycerol-phosphate dehydratase.

The protein in the N-terminal section; belongs to the histidinol-phosphatase family. This sequence in the C-terminal section; belongs to the imidazoleglycerol-phosphate dehydratase family. Mg(2+) is required as a cofactor.

It is found in the cytoplasm. The enzyme catalyses D-erythro-1-(imidazol-4-yl)glycerol 3-phosphate = 3-(imidazol-4-yl)-2-oxopropyl phosphate + H2O. It carries out the reaction L-histidinol phosphate + H2O = L-histidinol + phosphate. The protein operates within amino-acid biosynthesis; L-histidine biosynthesis; L-histidine from 5-phospho-alpha-D-ribose 1-diphosphate: step 6/9. It participates in amino-acid biosynthesis; L-histidine biosynthesis; L-histidine from 5-phospho-alpha-D-ribose 1-diphosphate: step 8/9. This is Histidine biosynthesis bifunctional protein HisB from Spirosoma linguale (strain ATCC 33905 / DSM 74 / LMG 10896 / Claus 1).